We begin with the raw amino-acid sequence, 23 residues long: Brevinin-1Eb (23 aa).

Cysteine 17 and cysteine 23 form a disulfide bridge.

It belongs to the frog skin active peptide (FSAP) family. Brevinin subfamily. As to expression, expressed by the skin glands.

It localises to the secreted. Shows antibacterial activity against representative Gram-negative and Gram-positive bacterial species, and a very high hemolytic activity. The protein is Brevinin-1Eb of Pelophylax lessonae (Pool frog).